The primary structure comprises 216 residues: Invasion protein InvF (216 aa).

Residues 112-210 (YWLVGYLLAQ…GVSPRKLSNI (99 aa)) enclose the HTH araC/xylS-type domain. DNA-binding regions (H-T-H motif) lie at residues 129 to 150 (RMLG…SRAL) and 177 to 200 (ITQL…KELI).

Its function is as follows. Transcriptional regulator required for the expression of several genes encoding type III secretion system SPI1 effector proteins. The interaction with SicA is necessary for the activation of sigDE (sopB pipC), sicAsipBCDA, and sopE. The polypeptide is Invasion protein InvF (invF) (Salmonella typhi).